Reading from the N-terminus, the 631-residue chain is Peptide-N(4)-(N-acetyl-beta-glucosaminyl)asparagine amidase (631 aa).

The PUB domain maps to 34 to 97 (EAVRILLVLL…PSSNAYTLPT (64 aa)). Position 126 is a phosphoserine (serine 126). The Zn(2+) site is built by cysteine 246, cysteine 249, cysteine 272, and cysteine 273. The Nucleophile role is filled by cysteine 296. Catalysis depends on residues histidine 323 and aspartate 340. In terms of domain architecture, PAW spans 441 to 631 (ELKGRSSGSL…YPFDLQVQLH (191 aa)).

Belongs to the transglutaminase-like superfamily. PNGase family. Zn(2+) is required as a cofactor.

It localises to the cytoplasm. It catalyses the reaction Hydrolysis of an N(4)-(acetyl-beta-D-glucosaminyl)asparagine residue in which the glucosamine residue may be further glycosylated, to yield a (substituted) N-acetyl-beta-D-glucosaminylamine and a peptide containing an aspartate residue.. In terms of biological role, specifically deglycosylates the denatured form of N-linked glycoproteins in the cytoplasm and assists their proteasome-mediated degradation. Cleaves the beta-aspartyl-glucosamine (GlcNAc) of the glycan and the amide side chain of Asn, converting Asn to Asp. Prefers proteins containing high-mannose over those bearing complex type oligosaccharides. Can recognize misfolded proteins in the endoplasmic reticulum that are exported to the cytosol to be destroyed and deglycosylate them, while it has no activity toward native proteins. Deglycosylation is a prerequisite for subsequent proteasome-mediated degradation of some, but not all, misfolded glycoproteins. This is Peptide-N(4)-(N-acetyl-beta-glucosaminyl)asparagine amidase (Pngl) from Drosophila melanogaster (Fruit fly).